A 67-amino-acid polypeptide reads, in one-letter code: DNA-directed RNA polymerase subunit omega (67 aa).

It belongs to the RNA polymerase subunit omega family. As to quaternary structure, the RNAP catalytic core consists of 2 alpha, 1 beta, 1 beta' and 1 omega subunit. When a sigma factor is associated with the core the holoenzyme is formed, which can initiate transcription.

It catalyses the reaction RNA(n) + a ribonucleoside 5'-triphosphate = RNA(n+1) + diphosphate. Its function is as follows. Promotes RNA polymerase assembly. Latches the N- and C-terminal regions of the beta' subunit thereby facilitating its interaction with the beta and alpha subunits. The polypeptide is DNA-directed RNA polymerase subunit omega (Burkholderia multivorans (strain ATCC 17616 / 249)).